Consider the following 407-residue polypeptide: MPGHLQEGFGCVVTNRFDQLFDDESDPFEVLKAAENKKKEAGGGGVGGPGAKSAAQAAAQTNSNAAGKQLRKESQKDRKNPLPPSVGVADKKEETQPPVALKKEGIRRVGRRPDQQLQGDGKLIDRRAERRPPRERRFEKPLEEKGEGGEFSVDRPIIERPIRGRGGLGRGRGGRGRGMGRGDGFDSRGKREFDRHSGSDRSSFSHYSGLKHEDKRGGSGSHNWGTVKDELTESPKYIQKQISYNCSDLDQSNVTEETPEGEEHPVADTENKENEVEEVKEEGPKEMTLDEWKAIQNKDRAKVEFNIRKPNEGADGQWKKGFVLHKSKSEEAHAEDSVMDHHFRKPANDITSQLEINFGDLGRPGRGGRGGRGGRGRGGRPNRGSRTDKSSASAPDVDDPEAFPALA.

Ser25 carries the phosphoserine modification. A disordered region spans residues 33-227; that stretch reads AAENKKKEAG…GSGSHNWGTV (195 aa). Over residues 51 to 68 the composition is skewed to low complexity; it reads AKSAAQAAAQTNSNAAGK. Lys52 bears the N6-acetyllysine; alternate mark. Residue Lys52 forms a Glycyl lysine isopeptide (Lys-Gly) (interchain with G-Cter in SUMO1); alternate linkage. Residue Lys68 is modified to N6-acetyllysine. Basic and acidic residues-rich tracts occupy residues 70-80, 89-114, and 122-162; these read LRKESQKDRKN, ADKK…RRPD, and KLID…ERPI. Lys102 participates in a covalent cross-link: Glycyl lysine isopeptide (Lys-Gly) (interchain with G-Cter in SUMO2). 2 positions are modified to N6-acetyllysine: Lys122 and Lys140. Gly residues predominate over residues 164-182; sequence GRGGLGRGRGGRGRGMGRG. Residues Arg165 and Arg188 each carry the omega-N-methylarginine modification. A compositionally biased stretch (basic and acidic residues) spans 183–199; the sequence is DGFDSRGKREFDRHSGS. Phosphoserine occurs at positions 197, 199, 203, 205, and 208. At Lys211 the chain carries N6-acetyllysine; alternate. Lys211 is covalently cross-linked (Glycyl lysine isopeptide (Lys-Gly) (interchain with G-Cter in SUMO2); alternate). Omega-N-methylarginine is present on Arg216. At Ser221 the chain carries Phosphoserine. At Thr226 the chain carries Phosphothreonine. Residue Lys228 forms a Glycyl lysine isopeptide (Lys-Gly) (interchain with G-Cter in SUMO1); alternate linkage. Residue Lys228 forms a Glycyl lysine isopeptide (Lys-Gly) (interchain with G-Cter in SUMO2); alternate linkage. A phosphoserine mark is found at Leu231, Ser234, and Tyr237. A Phosphothreonine modification is found at Ser234. Lys240 is subject to Phosphothreonine. Polar residues predominate over residues 242-256; it reads ISYNCSDLDQSNVTE. Disordered regions lie at residues 242–288 and 327–407; these read ISYN…KEMT and SKSE…PALA. A compositionally biased stretch (basic and acidic residues) spans 261 to 274; sequence GEEHPVADTENKEN. A Glycyl lysine isopeptide (Lys-Gly) (interchain with G-Cter in SUMO2) cross-link involves residue Lys280. Residues 327–341 show a composition bias toward basic and acidic residues; that stretch reads SKSEEAHAEDSVMDH. Lys328 carries the N6-acetyllysine modification. Ser329 is modified (phosphoserine). Residues 362–371 show a composition bias toward gly residues; sequence GRPGRGGRGG. Omega-N-methylarginine occurs at positions 363, 366, and 369. A phosphoserine mark is found at Ser391 and Ser393.

This sequence belongs to the SERBP1-HABP4 family. In terms of assembly, associates with mature 80S ribosomes. Interacts with EEF2/eEF2; interaction sequesters EEF2/eEF2 at the A-site of the ribosome, thereby blocking the interaction sites of the mRNA-tRNA complex, promoting ribosome stabilization and hibernation. Interacts with SPIN1. Interacts with CHD3 and TDRD3. Interacts with ZDHHC17 (via ANK repeats). In terms of processing, phosphorylation by MTOR inhibits SERBP1 and relieves ribosome hibernation.

The protein localises to the cytoplasm. Its subcellular location is the nucleus. It is found in the perinuclear region. In terms of biological role, ribosome-binding protein that promotes ribosome hibernation, a process during which ribosomes are stabilized in an inactive state and preserved from proteasomal degradation. Acts via its association with EEF2/eEF2 factor, sequestering EEF2/eEF2 at the A-site of the ribosome and promoting ribosome stabilization and storage in an inactive state. May also play a role in the regulation of mRNA stability: binds to the 3'-most 134 nt of the SERPINE1/PAI1 mRNA, a region which confers cyclic nucleotide regulation of message decay. Seems to play a role in PML-nuclear bodies formation. In Mus musculus (Mouse), this protein is SERPINE1 mRNA-binding protein 1.